A 79-amino-acid chain; its full sequence is U-scoloptoxin(15)-Sm1a (79 aa).

An N-terminal signal peptide occupies residues 1–25 (MKMNVVVLSVVVLLLFIANIQQTEA).

Belongs to the scoloptoxin-15 family. Post-translationally, contains 2 disulfide bonds. In terms of tissue distribution, expressed by the venom gland.

It localises to the secreted. The protein is U-scoloptoxin(15)-Sm1a of Scolopendra morsitans (Tanzanian blue ringleg centipede).